The chain runs to 336 residues: Aromatic prenyltransferase (336 aa).

It belongs to the aromatic prenyltransferase family.

Its function is as follows. Prenyltransferase that attaches isoprenoid moieties to carbon atoms of aromatic substrates in an enzyme-catalyzed Friedel-Crafts reaction. Shows specificity for dimethylallyl diphosphate (DMAPP) and does not accept geranyl diphosphate (GPP) or isopentenyl diphosphate (IPP). Prenylates the artificial substrate 2,7-dihydroxynaphthalene (2,7-DHN), as well as dihydrophenazine-1-carboxylic acid at a lower level. Only traces of products are detected with aspulvinone E, flaviolin, or 4-hydroxybenzoic acid as substrates; and no product is formed with L-tryptophan, L-tyrosine, or 4-hydroxyphenylpyruvate. Ptf seems no to be involved in the prenylation reaction in the biosynthesis of aspulvinone H and J and the physiological function of ptf remains unknown. The polypeptide is Aromatic prenyltransferase (Aspergillus terreus (strain NIH 2624 / FGSC A1156)).